The following is a 125-amino-acid chain: uncharacterized protein (125 aa).

The HTH dtxR-type domain maps to 1–63; it reads MSQSIEDYLE…YEPYIGITLT (63 aa).

The protein belongs to the DtxR/MntR family.

This is an uncharacterized protein from Methanocaldococcus jannaschii (strain ATCC 43067 / DSM 2661 / JAL-1 / JCM 10045 / NBRC 100440) (Methanococcus jannaschii).